A 76-amino-acid polypeptide reads, in one-letter code: Putative cation transport regulator ChaB (76 aa).

This sequence belongs to the ChaB family. As to quaternary structure, monomer.

Functionally, might be a regulator of the sodium-potassium/proton antiporter ChaA. The sequence is that of Putative cation transport regulator ChaB from Escherichia coli O157:H7.